The chain runs to 175 residues: Glutamyl-tRNA(Gln) amidotransferase subunit F, mitochondrial (175 aa).

The N-terminal 19 residues, Met1–Tyr19, are a transit peptide targeting the mitochondrion.

It belongs to the GatF family. As to quaternary structure, subunit of the heterotrimeric GatFAB amidotransferase (AdT) complex, composed of A, B and F subunits.

The protein resides in the mitochondrion inner membrane. The catalysed reaction is L-glutamyl-tRNA(Gln) + L-glutamine + ATP + H2O = L-glutaminyl-tRNA(Gln) + L-glutamate + ADP + phosphate + H(+). Allows the formation of correctly charged Gln-tRNA(Gln) through the transamidation of misacylated Glu-tRNA(Gln) in the mitochondria. The reaction takes place in the presence of glutamine and ATP through an activated gamma-phospho-Glu-tRNA(Gln). Required for proper protein synthesis within the mitochondrion. The sequence is that of Glutamyl-tRNA(Gln) amidotransferase subunit F, mitochondrial from Lachancea thermotolerans (strain ATCC 56472 / CBS 6340 / NRRL Y-8284) (Yeast).